The chain runs to 87 residues: uncharacterized protein (87 aa).

This is an uncharacterized protein from Saccharomyces cerevisiae (strain ATCC 204508 / S288c) (Baker's yeast).